Here is a 454-residue protein sequence, read N- to C-terminus: MVKGGREALLGGYEMGRTLGEGNFGKVKYARHLATGGHFAVKILDRGRVVSLRAGDQIRREIATLKLLRHPHVVRLHEVAASKTKIYMVLEFVNGGELFERIAVKGKLSEKEGRRLFQQLIDGVSYCHDRGVYHRDLKPENVLVDQKGNIKISDFGLSALPQHLGNDGLLHTTCGSPNYIAPEVLQNKGYDGSLSDIWSCGVILYVMLIGYLPFDDRNIVVLYQKIFKGDTQIPKWLSHSAQNLLRRILEPNPMKRIDMAGIKSHEWFQKDYIPVLPYDDDDEDVQFGARLPAKEQINDEPGDKNSHQINAFQLIGMASSLDLSGFFEDEEVSQRRIRFTSTHPPKDAFDKIESSATELGFQVQRGHSKLKLMRNCKGSKNPESFMVSAEVFELGPSVNVVELRKSNGDPALYRQLCERISSDMGARNTEQIFATASLEDDLQNSNAGTPLFAL.

One can recognise a Protein kinase domain in the interval 13-268 (YEMGRTLGEG…MAGIKSHEWF (256 aa)). Residues 19-27 (LGEGNFGKV) and Lys42 each bind ATP. Residue Asp136 is the Proton acceptor of the active site. The interval 154–183 (DFGLSALPQHLGNDGLLHTTCGSPNYIAPE) is activation loop. Residues 304–328 (KNSHQINAFQLIGMASSLDLSGFFE) enclose the NAF domain. Positions 334–363 (QRRIRFTSTHPPKDAFDKIESSATELGFQV) are PPI.

Belongs to the protein kinase superfamily. CAMK Ser/Thr protein kinase family. SNF1 subfamily. It depends on Mn(2+) as a cofactor.

It carries out the reaction L-seryl-[protein] + ATP = O-phospho-L-seryl-[protein] + ADP + H(+). It catalyses the reaction L-threonyl-[protein] + ATP = O-phospho-L-threonyl-[protein] + ADP + H(+). Functionally, CIPK serine-threonine protein kinases interact with CBL proteins. Binding of a CBL protein to the regulatory NAF domain of CIPK protein lead to the activation of the kinase in a calcium-dependent manner. The protein is CBL-interacting protein kinase 17 (CIPK17) of Oryza sativa subsp. japonica (Rice).